Reading from the N-terminus, the 850-residue chain is cAMP-inducible prespore protein D7 (850 aa).

The signal sequence occupies residues 1–24; the sequence is MYSKKYTSFVIVLILSCIISTCTS. Residues 119-130 show a composition bias toward low complexity; the sequence is QNNNIGSSIGDS. 2 disordered regions span residues 119–167 and 787–850; these read QNNN…SKTT and DAEL…QNQK. A compositionally biased stretch (polar residues) spans 131-143; the sequence is TGASTSPQFQSIN. Over residues 144–154 the composition is skewed to low complexity; the sequence is GLSGASQSSGS. Positions 787 to 798 are enriched in basic and acidic residues; the sequence is DAELAKNNKQEN. Over residues 801–820 the composition is skewed to polar residues; sequence ENLVQEKQQSPDQIKNQLKN. The span at 837-850 shows a compositional bias: low complexity; sequence EKNQQLLEQEQNQK.

The sequence is that of cAMP-inducible prespore protein D7 (D7) from Dictyostelium discoideum (Social amoeba).